We begin with the raw amino-acid sequence, 526 residues long: Vitamin B6 transporter bsu1 (526 aa).

The disordered stretch occupies residues 1-53 (MASKIASLFSPSETASKDQHENVAEDLELGTASSQSDGIHETNSEYDEKKREE). The segment covering 38–53 (GIHETNSEYDEKKREE) has biased composition (basic and acidic residues). 12 consecutive transmembrane segments (helical) span residues 81 to 101 (WSIVFMFCLMQIYVIWTSNGF), 118 to 138 (VATLCLSMNILGSGLGPMFLG), 147 to 167 (KPVYFCSIFVYTVFNISCALP), 173 to 192 (MIISHFIIGVAGSTALTNVA), 204 to 224 (AGVPMSLFVWACAGGAIGAPM), 238 to 257 (WLYYINIIVGGFFLIVILII), 314 to 330 (LYNFYAYGISYFFLTAI), 349 to 366 (YLSGFVASTLLFLYQPIQ), 387 to 407 (FTSALFITLLFPAGMFLFAFT), 413 to 432 (PWMSPIVGNSMVTVANGHNW), 444 to 461 (PLLSGSAVAAFTLPSFIG), and 480 to 501 (WAVATMAFISISIPFIIYTFYF).

Belongs to the major facilitator superfamily. CAR1 family.

Its subcellular location is the membrane. Thiamine-regulated, high affinity import carrier of pyridoxine, pyridoxal and pyridoxamine. Also imports, but does not export, amiloride and so confers sensitivity. The polypeptide is Vitamin B6 transporter bsu1 (bsu1) (Schizosaccharomyces pombe (strain 972 / ATCC 24843) (Fission yeast)).